A 126-amino-acid polypeptide reads, in one-letter code: Protein ApaG (126 aa).

Residues 2 to 126 form the ApaG domain; that stretch reads NQLAASVSVD…FRLSIPGLLH (125 aa).

This chain is Protein ApaG, found in Shewanella pealeana (strain ATCC 700345 / ANG-SQ1).